A 112-amino-acid chain; its full sequence is Nitrogen regulatory protein GlnK1 (112 aa).

T29 is an ADP binding site. T29 and V38 together coordinate ATP. 52 to 54 serves as a coordination point for 2-oxoglutarate; that stretch reads IVD. Residues V64, 88–90, and 101–103 contribute to the ADP site; these read DGK and RVR. ATP is bound by residues V64, 86–90, and 101–103; these read PGDGK and RVR.

This sequence belongs to the P(II) protein family. As to quaternary structure, homotrimer. Interacts and forms a complex with Amt1.

The protein localises to the cytoplasm. With respect to regulation, formation of the GlnK1/Amt1 complex is decreased in the presence of Mg-ATP or 2-oxoglutarate. The presence of both effectors abolishes the formation of the complex. Its function is as follows. Involved in the regulation of nitrogen metabolism. Regulates the activity of its targets by protein-protein interaction in response to the nitrogen status of the cell. Regulates the activity of the ammonia channel Amt1 via direct interaction. This Methanocaldococcus jannaschii (strain ATCC 43067 / DSM 2661 / JAL-1 / JCM 10045 / NBRC 100440) (Methanococcus jannaschii) protein is Nitrogen regulatory protein GlnK1.